A 749-amino-acid polypeptide reads, in one-letter code: 1,4-alpha-glucan branching enzyme GlgB (749 aa).

Catalysis depends on Asp427, which acts as the Nucleophile. The active-site Proton donor is the Glu480.

It belongs to the glycosyl hydrolase 13 family. GlgB subfamily. Monomer.

It catalyses the reaction Transfers a segment of a (1-&gt;4)-alpha-D-glucan chain to a primary hydroxy group in a similar glucan chain.. It participates in glycan biosynthesis; glycogen biosynthesis. In terms of biological role, catalyzes the formation of the alpha-1,6-glucosidic linkages in glycogen by scission of a 1,4-alpha-linked oligosaccharide from growing alpha-1,4-glucan chains and the subsequent attachment of the oligosaccharide to the alpha-1,6 position. The sequence is that of 1,4-alpha-glucan branching enzyme GlgB from Thermobifida fusca (strain YX).